The chain runs to 401 residues: Ascaroside receptor GPR3 (401 aa).

The Extracellular segment spans residues 1 to 16; that stretch reads MQPFGDAWSQRHLAGV. A helical membrane pass occupies residues 17-37; that stretch reads VLAGSVLSIVGSLYMILGFFF. The Cytoplasmic portion of the chain corresponds to 38-47; sequence LRECRSFRHK. Residues 48 to 68 form a helical membrane-spanning segment; the sequence is LILGLAVSDLLLALNFFIPSL. Topologically, residues 69-93 are extracellular; that stretch reads SMVTGREISSPWNEGFCSANGFLMQ. A disulfide bridge links Cys85 with Cys159. The helical transmembrane segment at 94–114 threads the bilayer; the sequence is LFFAQIDVWQISIALITLLML. Topologically, residues 115 to 128 are cytoplasmic; sequence SGPSMVLKWIRENV. Residues 129–149 traverse the membrane as a helical segment; that stretch reads WAVWLFPWLVSLIAAFFAFGF. The Extracellular segment spans residues 150–175; that stretch reads WDYANVGGFCWLGSRNIRLYFNYIPR. A helical transmembrane segment spans residues 176–196; it reads WIIILVCLVIYIAVYRLILHA. The Cytoplasmic portion of the chain corresponds to 197 to 294; sequence RRRANIQKTY…QKQVRKIAIQ (98 aa). The interval 206–259 is disordered; sequence YRGRASDRAPPQPVTTTAPATNPESEKVNPDEISSGNGSSSLDTSRSGSSTGFT. Positions 239-257 are enriched in low complexity; sequence SSGNGSSSLDTSRSGSSTG. A helical membrane pass occupies residues 295 to 315; sequence MISYPLAYAVLWAIPTIVMII. Over 316 to 321 the chain is Extracellular; that stretch reads QVARGG. The helical transmembrane segment at 322–342 threads the bilayer; that stretch reads EGVSIHVEGLAKMLLVFNGFV. Residues 343–401 are Cytoplasmic-facing; sequence DAHVYGFNERTAMGWRQRIRPAAQEDDEEAAGTSGGVHEVVSRPEPTLKNPNVWQQNMV. The disordered stretch occupies residues 362 to 401; sequence RPAAQEDDEEAAGTSGGVHEVVSRPEPTLKNPNVWQQNMV. Residues 391–401 are compositionally biased toward polar residues; that stretch reads KNPNVWQQNMV.

Belongs to the G-protein coupled receptor 1 family. Interacts with ascaroside receptor GPR2; may form a functional heterodimer. Interacts with guanine nucleotide-binding protein alpha GPA2; to activate adenylate cyclase and positively regulate nematode trap formation.

It is found in the cell membrane. Functionally, g protein-coupled receptor that senses nematode ascaroside pheromones and signals via adenylate cyclase to positively regulate trap formation for nematode capture. This chain is Ascaroside receptor GPR3, found in Arthrobotrys oligospora (strain ATCC 24927 / CBS 115.81 / DSM 1491) (Nematode-trapping fungus).